The primary structure comprises 185 residues: MSPSLREGAQLRESKPAPCSFSIESILGLDQKKDCTTSVRPHRPWTDTCGDSEKGGNPPLHAPDLPSETSFPCPVDHPRPEERAPKYENYFSASETRSLKRELSWYRGRRPRTAFTQNQVEVLENVFRVNCYPGIDIREDLAQKLNLEEDRIQIWFQNRRAKMKRSRRESQFLMAKKPFNPDLLK.

The segment at 32-69 (KKDCTTSVRPHRPWTDTCGDSEKGGNPPLHAPDLPSET) is disordered. Residues 108–167 (GRRPRTAFTQNQVEVLENVFRVNCYPGIDIREDLAQKLNLEEDRIQIWFQNRRAKMKRSR) constitute a DNA-binding region (homeobox).

Belongs to the ANF homeobox family. In terms of assembly, can form heterodimers with PROP1 in binding to DNA Interacts with TLE1. High levels found in the embryonic liver, lower level expression seen in the viscera, amnion and yolk sac.

The protein localises to the nucleus. In terms of biological role, required for the normal development of the forebrain, eyes and other anterior structures such as the olfactory placodes and pituitary gland. Possible transcriptional repressor. Binds to the palindromic PIII sequence, 5'-AGCTTGAGTCTAATTGAATTAACTGTAC-3'. HESX1 and PROP1 bind as heterodimers on this palindromic site, and, in vitro, HESX1 can antagonize PROP1 activation. This chain is Homeobox expressed in ES cells 1 (Hesx1), found in Mus musculus (Mouse).